We begin with the raw amino-acid sequence, 114 residues long: Cytochrome c2 (114 aa).

Gln1 is modified (pyrrolidone carboxylic acid). Positions 13, 16, 17, and 93 each coordinate heme c.

It belongs to the cytochrome c family. In terms of processing, binds 1 heme c group covalently per subunit.

The protein resides in the periplasm. Its function is as follows. Cytochrome c2 is found mainly in purple, non-sulfur, photosynthetic bacteria where it functions as the electron donor to the oxidized bacteriochlorophyll in the photophosphorylation pathway. However, it may also have a role in the respiratory chain and is found in some non-photosynthetic bacteria. The chain is Cytochrome c2 from Rhodopseudomonas palustris.